The chain runs to 335 residues: Mesoderm-specific transcript homolog protein (335 aa).

A run of 2 helical transmembrane segments spans residues 13–33 (WWVQVGLLAVPLLAAYLHIPP) and 63–83 (VGVVGSPEIVVLLHGFPTSSY). Residues 71-310 (IVVLLHGFPT…PRSTVSILDD (240 aa)) enclose the AB hydrolase-1 domain. An RVIALD motif is present at residues 98–103 (RVIALD). N163 carries N-linked (GlcNAc...) asparagine glycosylation. A helical membrane pass occupies residues 266-286 (VGALASVTIPIHFIYGPLDPV).

It belongs to the AB hydrolase superfamily. In terms of tissue distribution, highly expressed in hydatidiform moles, but barely expressed in dermoid cysts. Biallelic expression is detected in blood lymphocytes. Seems to imprinted in an isoform-specific manner rather than in a tissue-specific manner in lymphocytes. Isoform 1 is expressed only from the paternal allele. Isoform 2 is expressed from both the paternal allele and the maternal allele.

It is found in the endoplasmic reticulum membrane. The chain is Mesoderm-specific transcript homolog protein (MEST) from Homo sapiens (Human).